A 234-amino-acid polypeptide reads, in one-letter code: Zein-alpha GZ19AB11 (234 aa).

A signal peptide spans 1–21 (MAAKIFCLLMLLGLSASAATA).

Belongs to the zein family.

In terms of biological role, zeins are major seed storage proteins. In Zea mays (Maize), this protein is Zein-alpha GZ19AB11.